A 106-amino-acid polypeptide reads, in one-letter code: Protamine (106 aa).

The disordered stretch occupies residues 1–106 (ARAVRRRRAR…TRRRRRRARR (106 aa)).

As to expression, sperm.

The protein resides in the nucleus. It is found in the chromosome. This chain is Protamine, found in Phorcus turbinatus (Sea snail).